The sequence spans 122 residues: MIQAQSYLNVADNSGAKKIMCIRVLGGSQRKYAAIGDVIIGVVKDSVPNMSLKKSEVVRAVVVRTCKGIRRENGMTIRFDDNAAVVINKDGNPKGTRVFGPVARELRDRNFTKIVSLAPEVL.

The protein belongs to the universal ribosomal protein uL14 family. As to quaternary structure, part of the 50S ribosomal subunit.

It is found in the plastid. It localises to the chloroplast. Binds to 23S rRNA. This is Large ribosomal subunit protein uL14c from Mesostigma viride (Green alga).